The primary structure comprises 872 residues: DNA mismatch repair protein MutS (872 aa).

Over residues 1 to 17 (MSISKIESVNAEKQSPV) the composition is skewed to polar residues. Residues 1 to 22 (MSISKIESVNAEKQSPVGTEIG) form a disordered region. 632 to 639 (GPNMGGKS) serves as a coordination point for ATP.

Belongs to the DNA mismatch repair MutS family.

This protein is involved in the repair of mismatches in DNA. It is possible that it carries out the mismatch recognition step. This protein has a weak ATPase activity. The chain is DNA mismatch repair protein MutS from Azoarcus sp. (strain BH72).